Consider the following 625-residue polypeptide: MGKRKFKAESQKLLDMVINSIYSQREVFLRELISNASDAIDKIYYKALTDDSLSFDVDNYYIKITPNKEERTLTVVDTGIGMTKEELENNLGVIAKSGSHTFKSENEIKDGHDIIGQFGVGFYAAFMVADKVEVVTKSIDSDAAFKWESKGSDGYSITEADKQDIGTTITLYIKENQEEENYDEFLDTFTLQQIIKKYSDFIRYPIKMDVTESKLKEGSEDEYEDVVEEQTINTMVPIWKKNKSELTDDDYTNFYQEKRYGFDKPLKHVHINVDGSIRYNAILFIPESAPFNYYTRDYEKGLELYSNGVLIMDKCADLLPDYFSFVKGMVDSEDLSLNISREMLQHDRQLKLIAKNIKKKVKQQLVSLLRDERENYEKFFDAFGQQIKFGVYSDYGQNKDELKDLLLFYSSKEKKLVTLEEYVSCMPEDQKYIYYATGDSRDRIEKLPQTELVADKGYEILYFTDEIDEFAIKMLMNYDEKEFRSVSSGDLGIEEDEKEENEQENNDNAELFTAMKEVLSTKVKDVRASKRLKSHPVVLTADGEISLEMEKIINAMPDDQQIQADKVLEINVNHDIFQSLKAAQGNDDEKFKLYTNLLYNQALLIEGLPINDPVEFTNDICKVMV.

The a; substrate-binding stretch occupies residues 1 to 341 (MGKRKFKAES…SEDLSLNISR (341 aa)). The segment at 342-551 (EMLQHDRQLK…DGEISLEMEK (210 aa)) is b. A c region spans residues 552–625 (IINAMPDDQQ…FTNDICKVMV (74 aa)).

The protein belongs to the heat shock protein 90 family. As to quaternary structure, homodimer.

It is found in the cytoplasm. Molecular chaperone. Has ATPase activity. The protein is Chaperone protein HtpG of Oceanobacillus iheyensis (strain DSM 14371 / CIP 107618 / JCM 11309 / KCTC 3954 / HTE831).